The primary structure comprises 214 residues: Adenylate kinase (214 aa).

ATP is bound at residue 10–15 (GAGKGT). The segment at 30-59 (STGDMLRAAVKAGTPLGLEAKKVMDAGQLV) is NMP. Residues threonine 31, arginine 36, 57–59 (QLV), 85–88 (GFPR), and glutamine 92 contribute to the AMP site. The LID stretch occupies residues 122–159 (GRRVHSGSGRVYHVVFNPPKVEGKDDVTGEDLSIRPDD). ATP contacts are provided by residues arginine 123 and 132–133 (VY). AMP contacts are provided by arginine 156 and arginine 167. An ATP-binding site is contributed by glutamine 200.

It belongs to the adenylate kinase family. In terms of assembly, monomer.

The protein localises to the cytoplasm. It catalyses the reaction AMP + ATP = 2 ADP. Its pathway is purine metabolism; AMP biosynthesis via salvage pathway; AMP from ADP: step 1/1. Functionally, catalyzes the reversible transfer of the terminal phosphate group between ATP and AMP. Plays an important role in cellular energy homeostasis and in adenine nucleotide metabolism. The protein is Adenylate kinase of Shewanella frigidimarina (strain NCIMB 400).